Consider the following 605-residue polypeptide: DNA primase (605 aa).

The CHC2-type zinc finger occupies 38–62; that stretch reads CPFHDEKTPSFTVSEDKQICHCFGC. The Toprim domain maps to 260 to 341; sequence DEIVLLEGFM…NVFVIQLPSG (82 aa). Residues E266, D310, and D312 each contribute to the Mg(2+) site.

The protein belongs to the DnaG primase family. As to quaternary structure, monomer. Interacts with DnaB. The cofactor is Zn(2+). Mg(2+) is required as a cofactor.

It catalyses the reaction ssDNA + n NTP = ssDNA/pppN(pN)n-1 hybrid + (n-1) diphosphate.. In terms of biological role, RNA polymerase that catalyzes the synthesis of short RNA molecules used as primers for DNA polymerase during DNA replication. The chain is DNA primase from Staphylococcus aureus (strain MSSA476).